Consider the following 403-residue polypeptide: MFACDELLLNASTIDATGLQLSNQAIVIRKGRIEWCGSEDQLPAHFQESAKSRKDCHGQLITPGLIDCHTHLVYAGHRAAEFRLKLQGVSYADIAKSGGGILSTVQMTRDASEEELVDQSLPRLLALKNEGVTTVEIKSGYGLDLQNELKMLRVARQLGEVAGIRVKTTFLGAHAVGPEFKGNSQAYVDFLCNEMLPAAKNMDLVDAVDVFCESIAFSIRQAEQIFQAAKDLNLPIKCHAEQLSNMGASSLAARYGALSCDHLEFLDENGALNMVKANTVAVLLPGAFYFLKEKQKPPVDLLRQVGVGMAIATDSNPGSSPTTSLLLMMSMACQFFSMSIPEVLSAVTYQASRALGMEKDIGSIEAGKIADLVLWSIKDSAALCYYFAYPLPHQTMVAGEWVS.

Histidine 69 and histidine 71 together coordinate Fe(3+). Residues histidine 69 and histidine 71 each coordinate Zn(2+). Arginine 78, tyrosine 141, and histidine 174 together coordinate 4-imidazolone-5-propanoate. Tyrosine 141 contacts N-formimidoyl-L-glutamate. A Fe(3+)-binding site is contributed by histidine 239. Residue histidine 239 participates in Zn(2+) binding. 4-imidazolone-5-propanoate is bound at residue glutamine 242. Fe(3+) is bound at residue aspartate 314. Aspartate 314 is a Zn(2+) binding site. N-formimidoyl-L-glutamate is bound by residues asparagine 316 and glycine 318. Serine 319 is a binding site for 4-imidazolone-5-propanoate.

The protein belongs to the metallo-dependent hydrolases superfamily. HutI family. The cofactor is Zn(2+). Fe(3+) is required as a cofactor.

Its subcellular location is the cytoplasm. The catalysed reaction is 4-imidazolone-5-propanoate + H2O = N-formimidoyl-L-glutamate. It participates in amino-acid degradation; L-histidine degradation into L-glutamate; N-formimidoyl-L-glutamate from L-histidine: step 3/3. Functionally, catalyzes the hydrolytic cleavage of the carbon-nitrogen bond in imidazolone-5-propanoate to yield N-formimidoyl-L-glutamate. It is the third step in the universal histidine degradation pathway. The sequence is that of Imidazolonepropionase from Legionella pneumophila (strain Paris).